Reading from the N-terminus, the 114-residue chain is Pancreatic progenitor cell differentiation and proliferation factor (114 aa).

Ser9 carries the phosphoserine modification. Disordered stretches follow at residues Gly22–Pro47 and Ala75–Ser114. Residues Ser23–Thr33 show a composition bias toward low complexity. Residues Gly102–Ser114 show a composition bias toward polar residues.

The protein belongs to the PPDPF family.

Its function is as follows. Probable regulator of exocrine pancreas development. In Homo sapiens (Human), this protein is Pancreatic progenitor cell differentiation and proliferation factor (PPDPF).